We begin with the raw amino-acid sequence, 903 residues long: Protein translocase subunit SecA (903 aa).

ATP-binding positions include Gln-85, 103 to 107 (GEGKT), and Asp-492. The tract at residues 863-890 (GDGVKQPVRRDKKVGRNSPCPCGSGKKY) is disordered. Zn(2+)-binding residues include Cys-882, Cys-884, Cys-893, and Cys-894.

Belongs to the SecA family. Monomer and homodimer. Part of the essential Sec protein translocation apparatus which comprises SecA, SecYEG and auxiliary proteins SecDF. Other proteins may also be involved. Zn(2+) serves as cofactor.

It localises to the cell membrane. Its subcellular location is the cytoplasm. The enzyme catalyses ATP + H2O + cellular proteinSide 1 = ADP + phosphate + cellular proteinSide 2.. Its function is as follows. Part of the Sec protein translocase complex. Interacts with the SecYEG preprotein conducting channel. Has a central role in coupling the hydrolysis of ATP to the transfer of proteins into and across the cell membrane, serving as an ATP-driven molecular motor driving the stepwise translocation of polypeptide chains across the membrane. The sequence is that of Protein translocase subunit SecA from Desulforudis audaxviator (strain MP104C).